The sequence spans 612 residues: Methionine--tRNA ligase (612 aa).

Residues 12–22 (PYANGPRHIGH) carry the 'HIGH' region motif. C144, C147, C157, and C160 together coordinate Zn(2+). The 'KMSKS' region signature appears at 350 to 354 (KFSSS). Position 353 (S353) interacts with ATP. The disordered stretch occupies residues 580-612 (IQPGTQLSKPKPLFPKLDPELAETGPEWAPVQK).

This sequence belongs to the class-I aminoacyl-tRNA synthetase family. MetG type 1 subfamily. Monomer. The cofactor is Zn(2+).

Its subcellular location is the cytoplasm. The catalysed reaction is tRNA(Met) + L-methionine + ATP = L-methionyl-tRNA(Met) + AMP + diphosphate. Is required not only for elongation of protein synthesis but also for the initiation of all mRNA translation through initiator tRNA(fMet) aminoacylation. In Corynebacterium jeikeium (strain K411), this protein is Methionine--tRNA ligase.